We begin with the raw amino-acid sequence, 123 residues long: Large ribosomal subunit protein bL17 (123 aa).

Belongs to the bacterial ribosomal protein bL17 family. In terms of assembly, part of the 50S ribosomal subunit. Contacts protein L32.

The polypeptide is Large ribosomal subunit protein bL17 (Dichelobacter nodosus (strain VCS1703A)).